The primary structure comprises 129 residues: Trefoil factor 2 (129 aa).

Residues 1–23 form the signal peptide; that stretch reads MGPRGAPLLAVVLVLGLHALVEG. 2 consecutive P-type domains span residues 29-73 and 79-122; these read CRCS…FHPL and EQCV…FFPQ. Intrachain disulfides connect Cys29–Cys127, Cys31–Cys58, Cys42–Cys57, Cys52–Cys69, Cys81–Cys107, Cys91–Cys106, and Cys101–Cys118.

Stomach and pancreas.

The protein localises to the secreted. Its function is as follows. Inhibits gastrointestinal motility and gastric acid secretion. Could function as a structural component of gastric mucus, possibly by stabilizing glycoproteins in the mucus gel through interactions with carbohydrate side chains. This Mus musculus (Mouse) protein is Trefoil factor 2 (Tff2).